A 455-amino-acid polypeptide reads, in one-letter code: Argininosuccinate lyase (455 aa).

It belongs to the lyase 1 family. Argininosuccinate lyase subfamily.

It localises to the cytoplasm. It carries out the reaction 2-(N(omega)-L-arginino)succinate = fumarate + L-arginine. It functions in the pathway amino-acid biosynthesis; L-arginine biosynthesis; L-arginine from L-ornithine and carbamoyl phosphate: step 3/3. This is Argininosuccinate lyase from Shewanella sp. (strain MR-4).